A 602-amino-acid chain; its full sequence is Leucine-rich repeat-containing protein 40 (602 aa).

The tract at residues 1-20 is disordered; that stretch reads MSRLKRIAGQDPRAGFKAAG. Residue Ser-71 is modified to Phosphoserine. 20 LRR repeats span residues 83 to 104, 106 to 127, 129 to 150, 152 to 173, 175 to 196, 198 to 219, 221 to 242, 244 to 265, 266 to 286, 290 to 311, 313 to 335, 336 to 356, 400 to 421, 426 to 447, 450 to 471, 473 to 494, 496 to 517, 519 to 540, 543 to 564, and 566 to 586; these read DLTK…LRLL, ALTV…MREL, NLQK…ITNL, NLKC…FEQL, NLED…FSSL, SLVR…INRM, RLKH…LAGM, SLEL…PSCS, LLKE…EHLK, SILV…IILL, SLER…GNLH, LKFL…IINK, TLKI…VFNA, IITS…MVEL, MVSD…LCML, KLTF…MESL, RLQT…LYRI, TLET…KMKM, NLTT…LGNC, and NLRT…AILI.

This Macaca fascicularis (Crab-eating macaque) protein is Leucine-rich repeat-containing protein 40 (LRRC40).